A 469-amino-acid chain; its full sequence is Probable ribonuclease FAU-1 (469 aa).

Belongs to the FAU-1 family.

Probable RNase involved in rRNA stability through maturation and/or degradation of precursor rRNAs. Binds to RNA in loop regions with AU-rich sequences. The sequence is that of Probable ribonuclease FAU-1 from Ignicoccus hospitalis (strain KIN4/I / DSM 18386 / JCM 14125).